Consider the following 316-residue polypeptide: Protoheme IX farnesyltransferase (316 aa).

8 helical membrane-spanning segments follow: residues 35 to 55 (VMVLVIFTALVGMVVSQGHVQ), 56 to 76 (PAIGAISLLAIAVGAGASGCL), 119 to 139 (VVLGLAANLLAAALLAFTIVF), 156 to 176 (IVIGGAAGALPPVIGQAVVTG), 183 to 203 (LILFAIIFIWTPPHFWALALI), 229 to 246 (IVWYSLLLAPLGLVPVAL), 250 to 272 (GLVYAVVGLVGGLGMVAFSIRVL), and 283 to 303 (AAMGMFGFSILYLFALFSALL).

It belongs to the UbiA prenyltransferase family. Protoheme IX farnesyltransferase subfamily.

The protein resides in the cell inner membrane. The catalysed reaction is heme b + (2E,6E)-farnesyl diphosphate + H2O = Fe(II)-heme o + diphosphate. It functions in the pathway porphyrin-containing compound metabolism; heme O biosynthesis; heme O from protoheme: step 1/1. In terms of biological role, converts heme B (protoheme IX) to heme O by substitution of the vinyl group on carbon 2 of heme B porphyrin ring with a hydroxyethyl farnesyl side group. The chain is Protoheme IX farnesyltransferase from Methylobacterium radiotolerans (strain ATCC 27329 / DSM 1819 / JCM 2831 / NBRC 15690 / NCIMB 10815 / 0-1).